A 632-amino-acid polypeptide reads, in one-letter code: tRNA uridine 5-carboxymethylaminomethyl modification enzyme MnmG (632 aa).

Residues 15–20 (GAGHAG), Ile-127, and Ser-182 contribute to the FAD site. 276 to 290 (GPRYCPSIEDKIVRF) serves as a coordination point for NAD(+). Gln-373 is a binding site for FAD.

It belongs to the MnmG family. In terms of assembly, homodimer. Heterotetramer of two MnmE and two MnmG subunits. The cofactor is FAD.

Its subcellular location is the cytoplasm. Functionally, NAD-binding protein involved in the addition of a carboxymethylaminomethyl (cmnm) group at the wobble position (U34) of certain tRNAs, forming tRNA-cmnm(5)s(2)U34. The chain is tRNA uridine 5-carboxymethylaminomethyl modification enzyme MnmG from Streptococcus pyogenes serotype M2 (strain MGAS10270).